The primary structure comprises 634 residues: Phosphatase and actin regulator 2 (634 aa).

Disordered stretches follow at residues 1 to 32, 84 to 344, 412 to 471, and 485 to 508; these read MDNA…KRKG, LPDQ…PLED, PQLL…ALAS, and NRPS…ERQE. Residue aspartate 2 is the site of N-myristoyl glycine attachment. The span at 13–26 shows a compositional bias: polar residues; the sequence is IANSDGPTAGSQTP. Phosphoserine is present on serine 16. Position 25 is a phosphothreonine (threonine 25). An RPEL 1 repeat occupies 60–85; the sequence is AVLERKISTRQSREELIRRGVLKELP. Composition is skewed to basic and acidic residues over residues 108-120 and 137-147; these read ESTR…KSEE and EDKKENTENHS. The span at 153-162 shows a compositional bias: pro residues; it reads PALPPSAPPK. Composition is skewed to low complexity over residues 231-247 and 276-290; these read GSKA…SSRP and TSHL…GTSD. Over residues 291–304 the composition is skewed to basic and acidic residues; sequence LKGEPAETRVESFK. The span at 324 to 341 shows a compositional bias: pro residues; it reads VPPPPVAPAPSPLAPPLP. Phosphoserine is present on serine 423. The segment covering 452 to 464 has biased composition (acidic residues); the sequence is TDDEDEDEDEDGS. RPEL repeat units follow at residues 477-502, 515-540, and 553-578; these read DTLA…QRTS, TKLV…KQKN, and RRLS…RFNE. The span at 488–508 shows a compositional bias: basic and acidic residues; it reads SKKELEDKNILQRTSEEERQE. Serine 522 and serine 560 each carry phosphoserine.

Belongs to the phosphatase and actin regulator family. In terms of assembly, binds PPP1CA and actin.

Its subcellular location is the membrane. This Homo sapiens (Human) protein is Phosphatase and actin regulator 2 (PHACTR2).